The chain runs to 126 residues: Chorion class B protein M1768 (126 aa).

The left arm stretch occupies residues 1–17 (YGGLGYGGLGGGCGRGF). The interval 18 to 86 (SGGGLPVATA…GNGAVGITRE (69 aa)) is central domain. The tract at residues 87-126 (GGFGYGAGYGDGYGLGFGGYGGGYGLGYGGYGGCGCSWGY) is right arm (Gly-rich tandem repeats).

Belongs to the chorion protein family.

In terms of biological role, this protein is one of many from the eggshell of the silk moth. The chain is Chorion class B protein M1768 from Bombyx mori (Silk moth).